The sequence spans 172 residues: MAEKRNIFLIGPMGAGKSTIGREIADRLHLEFFDSDQEIERRTGADIAWVFDLEGEEGFRKREETVIEDLSEKHGIVLATGGGSVISTNVRNHLSARGIVVYLETTIDKQVARTQRDRRRPLLQTSEEPRTVLENLAVERNPLYEDIADIIVQTDDQSAKVVAHKIIERLDF.

14–19 (GAGKST) serves as a coordination point for ATP. Serine 18 is a binding site for Mg(2+). Substrate contacts are provided by aspartate 36, arginine 60, and glycine 82. Arginine 120 is an ATP binding site. Position 140 (arginine 140) interacts with substrate. Glutamine 157 lines the ATP pocket.

This sequence belongs to the shikimate kinase family. In terms of assembly, monomer. The cofactor is Mg(2+).

The protein resides in the cytoplasm. The enzyme catalyses shikimate + ATP = 3-phosphoshikimate + ADP + H(+). It functions in the pathway metabolic intermediate biosynthesis; chorismate biosynthesis; chorismate from D-erythrose 4-phosphate and phosphoenolpyruvate: step 5/7. Functionally, catalyzes the specific phosphorylation of the 3-hydroxyl group of shikimic acid using ATP as a cosubstrate. The chain is Shikimate kinase from Colwellia psychrerythraea (strain 34H / ATCC BAA-681) (Vibrio psychroerythus).